A 368-amino-acid polypeptide reads, in one-letter code: Outer membrane protein assembly factor BamC (368 aa).

Residues 1-18 form the signal peptide; that stretch reads MTTKFFIGTAIAVSVLSA. Cys19 carries the N-palmitoyl cysteine lipid modification. A lipid anchor (S-diacylglycerol cysteine) is attached at Cys19.

Belongs to the BamC family. Part of the Bam complex.

It localises to the cell outer membrane. In terms of biological role, part of the outer membrane protein assembly complex, which is involved in assembly and insertion of beta-barrel proteins into the outer membrane. This chain is Outer membrane protein assembly factor BamC, found in Pseudoalteromonas atlantica (strain T6c / ATCC BAA-1087).